The sequence spans 520 residues: MARFALVLHAHLPYVRAHGMWPFGEETLYEAMAETYLPLIRVLERLRAEGVEAPFTLGITPILAEQLADARIKEGFWAYAKDRLERAQGDYQRYRGTALEASARHQVAFWELTLDHFQRLSGDLVAAFRKAEEGGQVELITSNATHGYSPLLGYDEALWAQIKTGVSTYRRHFAKDPTGFWLPEMAYRPKGPWKPPVEGPPEGVRPGVDELLMRAGIRYTFVDAHLVQGGEPLSPYGEAALGPVESQEATYHVHELESGLRVLARNPETTLQVWSADYGYPGEGLYREFHRKDPLSGLHHWRVTHRKADLAEKAPYDPEAAFAKTEEHARHFVGLLERLAGRHPEGVILSPYDAELFGHWWYEGVAWLEAVLRLLAQNPKVRPVTAREAVQGPAVRTALPEGSWGRGGDHRVWLNEKTLDYWEKVYRAEGAMREAARRGVLPEGVLRQAMRELLLLEASDWPFLMETGQAEAYARERYEEHARAFFHLLKGASPEELRALEERDNPFPEADPRLYLFREA.

The active-site Nucleophile is the Glu-184. Positions 265 and 282 each coordinate substrate. The Proton donor role is filled by Asp-353. The substrate site is built by Trp-404, Asp-460, and Gln-469.

The protein belongs to the glycosyl hydrolase 57 family.

It carries out the reaction Transfers a segment of a (1-&gt;4)-alpha-D-glucan chain to a primary hydroxy group in a similar glucan chain.. It functions in the pathway glycan biosynthesis; glycogen biosynthesis. In terms of biological role, catalyzes the formation of branch points in alpha-glucans by cleavage of an alpha-1,4 glycosidic bond and subsequent transfer of the cleaved-off oligosaccharide to a new alpha-1,6 position. The branch chain-length distribution of the reaction products shows degree of polymerization (DP) of 3 to 13, with two local maxima at DP 7 and DP 11. Exhibits an alpha-retaining catalytic mechanism. Is involved in glycogen biosynthesis. Shows a secondary activity, i.e. the hydrolysis of the substrate, being 4% of the total activity. Can use amylose as substrate but not alpha-1,4-linked oligosaccharides of 2-7 glucose residues, beta-cyclodextrin, 6-O-glucosyl-beta-cyclodextrin and 6-O-maltosyl-beta-cyclodextrin. Is not able to branch amylopectin further, it only hydrolyzes amylopectin. Thus, displays preference for linear and long substrates (amylose) over branched structures (amylopectin). The sequence is that of 1,4-alpha-glucan branching enzyme TTHA1902 from Thermus thermophilus (strain ATCC 27634 / DSM 579 / HB8).